An 88-amino-acid chain; its full sequence is UPF0250 protein IL0958 (88 aa).

This sequence belongs to the UPF0250 family.

This is UPF0250 protein IL0958 from Idiomarina loihiensis (strain ATCC BAA-735 / DSM 15497 / L2-TR).